The sequence spans 274 residues: 2,3,4,5-tetrahydropyridine-2,6-dicarboxylate N-succinyltransferase (274 aa).

The substrate site is built by R104 and D141.

This sequence belongs to the transferase hexapeptide repeat family. Homotrimer.

It localises to the cytoplasm. The catalysed reaction is (S)-2,3,4,5-tetrahydrodipicolinate + succinyl-CoA + H2O = (S)-2-succinylamino-6-oxoheptanedioate + CoA. The protein operates within amino-acid biosynthesis; L-lysine biosynthesis via DAP pathway; LL-2,6-diaminopimelate from (S)-tetrahydrodipicolinate (succinylase route): step 1/3. The sequence is that of 2,3,4,5-tetrahydropyridine-2,6-dicarboxylate N-succinyltransferase from Salmonella arizonae (strain ATCC BAA-731 / CDC346-86 / RSK2980).